The sequence spans 124 residues: Phosphoribosyl-ATP pyrophosphatase (124 aa).

This sequence belongs to the PRA-PH family.

The protein localises to the cytoplasm. The enzyme catalyses 1-(5-phospho-beta-D-ribosyl)-ATP + H2O = 1-(5-phospho-beta-D-ribosyl)-5'-AMP + diphosphate + H(+). Its pathway is amino-acid biosynthesis; L-histidine biosynthesis; L-histidine from 5-phospho-alpha-D-ribose 1-diphosphate: step 2/9. This Ralstonia nicotianae (strain ATCC BAA-1114 / GMI1000) (Ralstonia solanacearum) protein is Phosphoribosyl-ATP pyrophosphatase (hisE).